The primary structure comprises 145 residues: Mannitol-specific phosphotransferase enzyme IIA component (145 aa).

In terms of domain architecture, PTS EIIA type-2 spans 4 to 144; that stretch reads PILKKENIVL…EEILSILNEV (141 aa). H64 serves as the catalytic Tele-phosphohistidine intermediate. H64 is subject to Phosphohistidine; by HPr.

It is found in the cytoplasm. The phosphoenolpyruvate-dependent sugar phosphotransferase system (sugar PTS), a major carbohydrate active transport system, catalyzes the phosphorylation of incoming sugar substrates concomitantly with their translocation across the cell membrane. The enzyme II CmtAB PTS system is involved in D-mannitol transport. The chain is Mannitol-specific phosphotransferase enzyme IIA component from Geobacillus stearothermophilus (Bacillus stearothermophilus).